The primary structure comprises 393 residues: NAD(P)H-quinone oxidoreductase subunit H, chloroplastic (393 aa).

The protein belongs to the complex I 49 kDa subunit family. NDH is composed of at least 16 different subunits, 5 of which are encoded in the nucleus.

The protein resides in the plastid. It localises to the chloroplast thylakoid membrane. It catalyses the reaction a plastoquinone + NADH + (n+1) H(+)(in) = a plastoquinol + NAD(+) + n H(+)(out). The enzyme catalyses a plastoquinone + NADPH + (n+1) H(+)(in) = a plastoquinol + NADP(+) + n H(+)(out). Its function is as follows. NDH shuttles electrons from NAD(P)H:plastoquinone, via FMN and iron-sulfur (Fe-S) centers, to quinones in the photosynthetic chain and possibly in a chloroplast respiratory chain. The immediate electron acceptor for the enzyme in this species is believed to be plastoquinone. Couples the redox reaction to proton translocation, and thus conserves the redox energy in a proton gradient. The polypeptide is NAD(P)H-quinone oxidoreductase subunit H, chloroplastic (Barbarea verna (Land cress)).